Here is an 876-residue protein sequence, read N- to C-terminus: DNA double-strand break repair Rad50 ATPase (876 aa).

Residues Arg11, 31-37 (NGAGKTT), and Gln139 each bind ATP. 2 coiled-coil regions span residues 188 to 528 (RERV…EDRL) and 575 to 710 (SGVE…RKER). The Zinc-hook domain maps to 387 to 484 (EETLQSEYEE…RLESVRRELE (98 aa)). The Zn(2+) site is built by Cys432 and Cys435.

Belongs to the SMC family. RAD50 subfamily. As to quaternary structure, homodimer. Forms a heterotetramer composed of two Mre11 subunits and two Rad50 subunits. Zn(2+) serves as cofactor.

Functionally, part of the Rad50/Mre11 complex, which is involved in the early steps of DNA double-strand break (DSB) repair. The complex may facilitate opening of the processed DNA ends to aid in the recruitment of HerA and NurA. Rad50 controls the balance between DNA end bridging and DNA resection via ATP-dependent structural rearrangements of the Rad50/Mre11 complex. This chain is DNA double-strand break repair Rad50 ATPase, found in Methanopyrus kandleri (strain AV19 / DSM 6324 / JCM 9639 / NBRC 100938).